A 546-amino-acid polypeptide reads, in one-letter code: Immunoglobulin heavy constant epsilon (546 aa).

Residues 1 to 499 (ASTQSPSVFP…EAPWTWTGLC (499 aa)) are Extracellular-facing. 4 Ig-like domains span residues 6-103 (PSVF…KTFS), 112-210 (PTVK…KKCA), 214-318 (PRGV…TKTS), and 324-423 (PEVY…RAVS). Disulfide bonds link cysteine 15–cysteine 105, cysteine 29–cysteine 85, cysteine 135–cysteine 193, cysteine 239–cysteine 299, and cysteine 345–cysteine 405. 7 N-linked (GlcNAc...) asparagine glycosylation sites follow: asparagine 21, asparagine 49, asparagine 99, asparagine 146, asparagine 252, asparagine 264, and asparagine 275. The helical transmembrane segment at 500–520 (IFAALFLLSVSYSAAITLLMV) threads the bilayer. Over 521–546 (QRFLSATRQGRPQTSLDYTNVLQPHA) the chain is Cytoplasmic.

In terms of assembly, the basic structural unit of both sIgE and mIgE molecules consists of two identical heavy chains and two identical light chains; disulfide-linked. N-terminal variable regions of the heavy and light chains form the antigen binding sites, whereas the C-terminal constant regions of the heavy chains interact with immune receptors to mediate effector functions. As to quaternary structure, part of IgE antibody. Interacts (via CH3) with the alpha chain/FCE1RA of IgE Fc receptor complex. Interacts (via CH3 region) with FCER2 (via C-type lectin domain); this interaction regulates IgE homeostasis. Part of IgE B cell antigen receptor complex (BCR). The BCR complex consists of one mIgE molecule responsible for antigen binding, non-covalently associated with CD79A and CD79B signaling chains. Expressed in B lymphocytes stimulated with IL4 and CD40.

It is found in the secreted. The protein resides in the cell membrane. Functionally, constant region of immunoglobulin heavy chains. Immunoglobulins, also known as antibodies, are membrane-bound or secreted glycoproteins produced by B lymphocytes. In the recognition phase of humoral immunity, the membrane-bound immunoglobulins serve as receptors which, upon binding of a specific antigen, trigger the clonal expansion and differentiation of B lymphocytes into immunoglobulins-secreting plasma cells. Secreted immunoglobulins mediate the effector phase of humoral immunity, which results in the elimination of bound antigens. The antigen binding site is formed by the variable domain of one heavy chain, together with that of its associated light chain. Thus, each immunoglobulin has two antigen binding sites with remarkable affinity for a particular antigen. The variable domains are assembled by a process called V-(D)-J rearrangement and can then be subjected to somatic hypermutations which, after exposure to antigen and selection, allow affinity maturation for a particular antigen. Its function is as follows. Constant region of secreted IgE, also known as the Fc region of IgE antibody. Mediates IgE effector functions on myeloid and lymphoid cells primarily via two Fc receptors, the high-affinity IgE Fc receptor complex/FCER1A:MS4A2:FCGR1A and the low-affinity FCER2 receptor, which upon antigen/allergen cross-linking initiate signaling pathways that lead to immune cell activation and differentiation. Triggers the immediate hypersensitivity response to allergens as a host defense mechanism against helminth parasites, pathogenic bacteria and venom toxicity. When dysregulated, it can elicit harmful life-threatening allergic and anaphylactic reactions. Stimulates the high-affinity IgE Fc receptor complex/FCER1A:MS4A2:FCGR1A on mast cells, basophils and eosinophils leading to secretion of vasoactive amines, lipid mediators and cytokines that contribute to inflammatory response, tissue remodeling and cytotoxicity against microbes. On macrophages, cross-linking of FCER2 by IgE immune complexes induces intracellular killing of parasites through activation of L-Arginine-nitric oxide pathway. Activates macrophages to kill tumor cells via antigen-specific antibody-dependent cytotoxicity (ADCC). Triggers differentiation of quiescent M0 macrophages toward M1 state and reprograms M2 macrophages toward a proinflammatory state with antitumor functions. Stimulates FCER2 on B cells and initiates IgE-dependent antigen uptake and presentation to T cells. Constant region of membrane-bound IgE (long mIgE), part of the B cell receptor complex (BCR). Upon antigen cross-linking triggers quick BCR signaling, ensuring survival of IgE-switched B cells and differentiation into plasma cells, thus regulating both primary and memory IgE responses. In terms of biological role, constant region of membrane-bound IgE (short mIgE), part of the B cell receptor complex (BCR). Upon antigen cross-linking initiates slower but sustained BCR signaling that negatively regulates mature B cell proliferation. The polypeptide is Immunoglobulin heavy constant epsilon (Homo sapiens (Human)).